The following is a 305-amino-acid chain: Fumarylacetoacetate hydrolase domain-containing protein 2 homolog (305 aa).

Residues Glu141, Glu143, and Asp172 each contribute to the a divalent metal cation site.

The protein belongs to the FAH family. Ca(2+) serves as cofactor. The cofactor is Mg(2+).

In terms of biological role, may have hydrolase activity. This Dictyostelium discoideum (Social amoeba) protein is Fumarylacetoacetate hydrolase domain-containing protein 2 homolog (fahd2).